We begin with the raw amino-acid sequence, 380 residues long: Tryptophan 2,3-dioxygenase (380 aa).

Residues 57 to 61 (FIITH) and Arg128 contribute to the substrate site. His313 contacts heme. Residue Thr328 coordinates substrate.

The protein belongs to the tryptophan 2,3-dioxygenase family. As to quaternary structure, homotetramer. Dimer of dimers. Heme is required as a cofactor.

It carries out the reaction L-tryptophan + O2 = N-formyl-L-kynurenine. It functions in the pathway amino-acid degradation; L-tryptophan degradation via kynurenine pathway; L-kynurenine from L-tryptophan: step 1/2. It participates in pigment biosynthesis; ommochrome biosynthesis. Heme-dependent dioxygenase that catalyzes the oxidative cleavage of the L-tryptophan (L-Trp) pyrrole ring and converts L-tryptophan to N-formyl-L-kynurenine. Catalyzes the oxidative cleavage of the indole moiety. This Drosophila virilis (Fruit fly) protein is Tryptophan 2,3-dioxygenase.